We begin with the raw amino-acid sequence, 247 residues long: 5'-nucleotidase SurE (247 aa).

A divalent metal cation-binding residues include aspartate 8, aspartate 9, serine 39, and asparagine 91.

The protein belongs to the SurE nucleotidase family. A divalent metal cation serves as cofactor.

Its subcellular location is the cytoplasm. It catalyses the reaction a ribonucleoside 5'-phosphate + H2O = a ribonucleoside + phosphate. In terms of biological role, nucleotidase that shows phosphatase activity on nucleoside 5'-monophosphates. The sequence is that of 5'-nucleotidase SurE from Aromatoleum aromaticum (strain DSM 19018 / LMG 30748 / EbN1) (Azoarcus sp. (strain EbN1)).